A 239-amino-acid polypeptide reads, in one-letter code: Phosphoribosylaminoimidazole-succinocarboxamide synthase (239 aa).

It belongs to the SAICAR synthetase family.

The catalysed reaction is 5-amino-1-(5-phospho-D-ribosyl)imidazole-4-carboxylate + L-aspartate + ATP = (2S)-2-[5-amino-1-(5-phospho-beta-D-ribosyl)imidazole-4-carboxamido]succinate + ADP + phosphate + 2 H(+). The protein operates within purine metabolism; IMP biosynthesis via de novo pathway; 5-amino-1-(5-phospho-D-ribosyl)imidazole-4-carboxamide from 5-amino-1-(5-phospho-D-ribosyl)imidazole-4-carboxylate: step 1/2. The protein is Phosphoribosylaminoimidazole-succinocarboxamide synthase of Chlorobium luteolum (strain DSM 273 / BCRC 81028 / 2530) (Pelodictyon luteolum).